A 126-amino-acid polypeptide reads, in one-letter code: Large ribosomal subunit protein bL12 (126 aa).

This sequence belongs to the bacterial ribosomal protein bL12 family. Homodimer. Part of the ribosomal stalk of the 50S ribosomal subunit. Forms a multimeric L10(L12)X complex, where L10 forms an elongated spine to which 2 to 4 L12 dimers bind in a sequential fashion. Binds GTP-bound translation factors.

Its function is as follows. Forms part of the ribosomal stalk which helps the ribosome interact with GTP-bound translation factors. Is thus essential for accurate translation. The protein is Large ribosomal subunit protein bL12 of Bordetella avium (strain 197N).